A 185-amino-acid chain; its full sequence is Elongation factor P (185 aa).

Belongs to the elongation factor P family.

It localises to the cytoplasm. It functions in the pathway protein biosynthesis; polypeptide chain elongation. In terms of biological role, involved in peptide bond synthesis. Stimulates efficient translation and peptide-bond synthesis on native or reconstituted 70S ribosomes in vitro. Probably functions indirectly by altering the affinity of the ribosome for aminoacyl-tRNA, thus increasing their reactivity as acceptors for peptidyl transferase. The sequence is that of Elongation factor P from Symbiobacterium thermophilum (strain DSM 24528 / JCM 14929 / IAM 14863 / T).